Consider the following 772-residue polypeptide: Acyl-homoserine lactone acylase PvdQ (772 aa).

The signal sequence occupies residues 1 to 28 (MPVFPFCRPMTCAGLAAALVAFSVGVQA). Positions 199–220 (AQSSAGFASALARQERFAAERG) are cleaved as a propeptide — spacer peptide. S221 acts as the Nucleophile in catalysis.

It belongs to the peptidase S45 family. Heterodimer of an alpha subunit and a beta subunit processed from the same precursor.

The protein resides in the periplasm. It carries out the reaction an N-acyl-L-homoserine lactone + H2O = L-homoserine lactone + a carboxylate. Catalyzes the deacylation of acyl-homoserine lactone (AHL or acyl-HSL), releasing homoserine lactone (HSL) and the corresponding fatty acid. Possesses a specificity for the degradation of long-chain acyl-HSLs (side chains of 11 to 14 carbons in length). The sequence is that of Acyl-homoserine lactone acylase PvdQ (pvdQ) from Pseudomonas putida (strain ATCC 47054 / DSM 6125 / CFBP 8728 / NCIMB 11950 / KT2440).